Consider the following 506-residue polypeptide: Cysteine--tRNA ligase (506 aa).

C34 is a binding site for Zn(2+). Residues 36–46 (PTVYDFAHIGN) carry the 'HIGH' region motif. Zn(2+) is bound by residues C230, H269, and E273. Residues 302 to 306 (KMSKS) carry the 'KMSKS' region motif. Residue K305 participates in ATP binding.

Belongs to the class-I aminoacyl-tRNA synthetase family. As to quaternary structure, monomer. The cofactor is Zn(2+).

The protein resides in the cytoplasm. It carries out the reaction tRNA(Cys) + L-cysteine + ATP = L-cysteinyl-tRNA(Cys) + AMP + diphosphate. The polypeptide is Cysteine--tRNA ligase (Brucella suis (strain ATCC 23445 / NCTC 10510)).